A 225-amino-acid polypeptide reads, in one-letter code: MKLFVGLGNPGARYAGNRHNIGYMAVEAIASAHGFGPWRSRFQGVTSEGRLGAEQVLLLKPETFMNLSGQSVGEAMRFYKLSPADLTVFHDELDLAPGRLRLKQGGGHAGHNGLRSIHAHVGEAYGRVRLGIGHPGHKDAVASYVLNDFAKADQGWLEDLLRGIADGAEALARGDGARFQNAVALRMQPPKPEKPKGEAKPAAPEAPEAAPDTRSALQRLADRFR.

Y14 lines the tRNA pocket. H19 serves as the catalytic Proton acceptor. F64, N66, and N112 together coordinate tRNA. The segment at 187–225 (MQPPKPEKPKGEAKPAAPEAPEAAPDTRSALQRLADRFR) is disordered. Residues 200 to 210 (KPAAPEAPEAA) are compositionally biased toward low complexity.

Belongs to the PTH family. In terms of assembly, monomer.

The protein localises to the cytoplasm. It carries out the reaction an N-acyl-L-alpha-aminoacyl-tRNA + H2O = an N-acyl-L-amino acid + a tRNA + H(+). Hydrolyzes ribosome-free peptidyl-tRNAs (with 1 or more amino acids incorporated), which drop off the ribosome during protein synthesis, or as a result of ribosome stalling. Functionally, catalyzes the release of premature peptidyl moieties from peptidyl-tRNA molecules trapped in stalled 50S ribosomal subunits, and thus maintains levels of free tRNAs and 50S ribosomes. The protein is Peptidyl-tRNA hydrolase of Cereibacter sphaeroides (strain ATCC 17025 / ATH 2.4.3) (Rhodobacter sphaeroides).